A 274-amino-acid polypeptide reads, in one-letter code: Large ribosomal subunit protein uL2cz/uL2cy (274 aa).

Disordered regions lie at residues 1–33 and 223–265; these read MAIHLYKTSTPSTRKRAVDSQGKSNPRNHLIYG and MNPV…KYND.

This sequence belongs to the universal ribosomal protein uL2 family. As to quaternary structure, part of the 50S ribosomal subunit.

It is found in the plastid. The protein resides in the chloroplast. The polypeptide is Large ribosomal subunit protein uL2cz/uL2cy (rpl2-A) (Pelargonium hortorum (Common geranium)).